The following is a 490-amino-acid chain: Tektin-3 (490 aa).

O-linked (GalNAc...) threonine glycosylation is found at threonine 7, threonine 9, and threonine 11. N-linked (GlcNAc...) asparagine glycosylation is found at asparagine 41, asparagine 86, asparagine 111, and asparagine 276. A coiled-coil region spans residues 415-461 (MAQLRLVNEVYEVDETIQTLQQRLRDSEDTLQSLAHTKATLEHDLAV).

It belongs to the tektin family. In terms of assembly, microtubule inner protein component of sperm flagellar doublet microtubules. Interacts with TEKT1, TEKT2, TEKT4 and TEKT5. Interacts with CCDC38. In terms of processing, N- and O-glycosylated. Ubiquitinated, leading to its degradation. Deubiquitinated by USP16, promoting its stability. Post-translationally, may be proteolytically processed during the epididymal transit of spermatozoa. As to expression, expressed preferentially in testis. Expressed predominantly in late pachytene spermatocytes and early round spermatids. Expressed in spermatozoa.

The protein resides in the cytoplasm. The protein localises to the cytoskeleton. It localises to the cilium axoneme. Its subcellular location is the flagellum axoneme. It is found in the cytoplasmic vesicle. The protein resides in the secretory vesicle. The protein localises to the acrosome outer membrane. Its function is as follows. Microtubule inner protein (MIP) part of the dynein-decorated doublet microtubules (DMTs) in cilia and flagellar axoneme. Forms filamentous polymers in the walls of ciliary and flagellar microtubules. Required for normal sperm mobility. The chain is Tektin-3 (Tekt3) from Mus musculus (Mouse).